The chain runs to 153 residues: MAANKERTFIMVKPDGVQRGLVGKIIERFEQKGFKLVALKFTWASKELLEKHYADLSARPFFPGLVNYMNSGPVVPMVWEGLNVVKTGRQMLGATNPADSLPGTIRGDFCIQVGRNIIHGSDAVESAEKEIALWFNEKELVTWTPAAKDWIYE.

Ala-2 is subject to N-acetylalanine. Residues Lys-13, Phe-61, Arg-89, Thr-95, Arg-106, and Asn-116 each contribute to the ATP site. Residue His-119 is the Pros-phosphohistidine intermediate of the active site. Ser-126 bears the Phosphoserine mark.

The protein belongs to the NDK family. Homohexamer. It depends on Mg(2+) as a cofactor.

The protein localises to the cytoplasm. Its subcellular location is the cytoskeleton. The enzyme catalyses a 2'-deoxyribonucleoside 5'-diphosphate + ATP = a 2'-deoxyribonucleoside 5'-triphosphate + ADP. It catalyses the reaction a ribonucleoside 5'-diphosphate + ATP = a ribonucleoside 5'-triphosphate + ADP. Its function is as follows. Major role in the synthesis of nucleoside triphosphates other than ATP. The ATP gamma phosphate is transferred to the NDP beta phosphate via a ping-pong mechanism, using a phosphorylated active-site intermediate. The chain is Nucleoside diphosphate kinase (awd) from Drosophila melanogaster (Fruit fly).